Reading from the N-terminus, the 1379-residue chain is DNA-directed RNA polymerase subunit beta'' (1379 aa).

The Zn(2+) site is built by cysteine 224, cysteine 295, cysteine 302, and cysteine 305. Residues serine 503–alanine 524 form a disordered region.

Belongs to the RNA polymerase beta' chain family. RpoC2 subfamily. In terms of assembly, in plastids the minimal PEP RNA polymerase catalytic core is composed of four subunits: alpha, beta, beta', and beta''. When a (nuclear-encoded) sigma factor is associated with the core the holoenzyme is formed, which can initiate transcription. Zn(2+) is required as a cofactor.

The protein resides in the plastid. The catalysed reaction is RNA(n) + a ribonucleoside 5'-triphosphate = RNA(n+1) + diphosphate. DNA-dependent RNA polymerase catalyzes the transcription of DNA into RNA using the four ribonucleoside triphosphates as substrates. The sequence is that of DNA-directed RNA polymerase subunit beta'' from Cuscuta exaltata (Tall dodder).